An 89-amino-acid chain; its full sequence is Small ribosomal subunit protein uS15 (89 aa).

The protein belongs to the universal ribosomal protein uS15 family. As to quaternary structure, part of the 30S ribosomal subunit. Forms a bridge to the 50S subunit in the 70S ribosome, contacting the 23S rRNA.

Functionally, one of the primary rRNA binding proteins, it binds directly to 16S rRNA where it helps nucleate assembly of the platform of the 30S subunit by binding and bridging several RNA helices of the 16S rRNA. Forms an intersubunit bridge (bridge B4) with the 23S rRNA of the 50S subunit in the ribosome. In Haemophilus influenzae (strain 86-028NP), this protein is Small ribosomal subunit protein uS15.